A 442-amino-acid polypeptide reads, in one-letter code: Cation channel sperm-associated protein 4 (442 aa).

The Cytoplasmic segment spans residues 1 to 66 (MSEKHKWWQQ…TQMYIKQLLR (66 aa)). The chain crosses the membrane as a helical span at residues 67 to 88 (HPAFQLLLAFLLLSNAITIALR). Residues 89–98 (TNSYLGQKHY) lie on the Extracellular side of the membrane. The chain crosses the membrane as a helical span at residues 99 to 125 (ELFSTIDDIVLTILICEVLLGWLNGFW). The Cytoplasmic segment spans residues 126–129 (IFWK). The helical transmembrane segment at 130–153 (DGWNILNFAIVFILFMGFFIKQLD) threads the bilayer. The Extracellular segment spans residues 154 to 156 (MVA). The chain crosses the membrane as a helical span at residues 157–175 (ITYPLRVLRLVHVCMAVEP). At 176 to 188 (LARIIKVILQSMP) the chain is on the cytoplasmic side. The chain crosses the membrane as a helical span at residues 189 to 212 (DLANVMALILFFMLVFSVFGVTLF). Over 213 to 222 (GAFVPKHFQN) the chain is Extracellular. Residues 223-234 (MGVALYTLFICI) constitute an intramembrane region (helical; Pore-forming). At 235 to 255 (TQDGWLDIYTDFQMDEREYAM) the chain is on the extracellular side. Residues 256–283 (EVGGAIYFAVFITLGAFIGLNLFVVVVT) traverse the membrane as a helical segment. The Cytoplasmic portion of the chain corresponds to 284–442 (TNLEQMMKTG…NMVNKHKFSH (159 aa)).

The protein belongs to the cation channel sperm-associated (TC 1.A.1.19) family. Component of the CatSper complex or CatSpermasome composed of the core pore-forming members CATSPER1, CATSPER2, CATSPER3 and CATSPER4 as well as auxiliary members CATSPERB, CATSPERG2, CATSPERD, CATSPERE, CATSPERZ, C2CD6/CATSPERT, SLCO6C1, TMEM249, TMEM262 and EFCAB9. HSPA1 may be an additional auxiliary complex member. The core complex members CATSPER1, CATSPER2, CATSPER3 and CATSPER4 form a heterotetrameric channel. The auxiliary CATSPERB, CATSPERG2, CATSPERD and CATSPERE subunits form a pavilion-like structure over the pore which stabilizes the complex through interactions with CATSPER4, CATSPER3, CATSPER1 and CATSPER2 respectively. SLCO6C1 interacts with CATSPERE and TMEM262/CATSPERH interacts with CATSPERB, further stabilizing the complex. C2CD6/CATSPERT interacts at least with CATSPERD and is required for targeting the CatSper complex in the flagellar membrane. Testis-specific.

Its subcellular location is the cell projection. The protein resides in the cilium. It localises to the flagellum membrane. It carries out the reaction Ca(2+)(in) = Ca(2+)(out). With respect to regulation, in contrast to the human ortholog, not activated by progesterone. Activated by intracellular alkalinization. In terms of biological role, pore-forming subunit of the CatSper complex, a sperm-specific voltage-gated calcium channel that plays a central role in sperm cell hyperactivation. Controls calcium entry to mediate the hyperactivated motility, a step needed for sperm motility which is essential late in the preparation of sperm for fertilization. This Mus musculus (Mouse) protein is Cation channel sperm-associated protein 4 (Catsper4).